Consider the following 425-residue polypeptide: uncharacterized protein (425 aa).

The region spanning 1–57 (MKDKPLKLTVEKLVYGGYGFSRLNGKAVFVRFASPKELVEAKVVKEKKDYTEAVVTK) is the TRAM domain. [4Fe-4S] cluster-binding residues include cysteine 70, cysteine 76, cysteine 79, and cysteine 153. 3 residues coordinate S-adenosyl-L-methionine: glutamine 260, aspartate 308, and aspartate 354. The active-site Nucleophile is cysteine 381.

Belongs to the class I-like SAM-binding methyltransferase superfamily. RNA M5U methyltransferase family.

This is an uncharacterized protein from Aquifex aeolicus (strain VF5).